The primary structure comprises 182 residues: Large ribosomal subunit protein uL16 (182 aa).

It belongs to the universal ribosomal protein uL16 family. As to quaternary structure, part of the 50S ribosomal subunit.

This Thermococcus kodakarensis (strain ATCC BAA-918 / JCM 12380 / KOD1) (Pyrococcus kodakaraensis (strain KOD1)) protein is Large ribosomal subunit protein uL16.